A 130-amino-acid polypeptide reads, in one-letter code: Small ribosomal subunit protein uS11 (130 aa).

This sequence belongs to the universal ribosomal protein uS11 family. As to quaternary structure, part of the 30S ribosomal subunit. Interacts with proteins S7 and S18. Binds to IF-3.

Located on the platform of the 30S subunit, it bridges several disparate RNA helices of the 16S rRNA. Forms part of the Shine-Dalgarno cleft in the 70S ribosome. The sequence is that of Small ribosomal subunit protein uS11 from Nitratiruptor sp. (strain SB155-2).